Reading from the N-terminus, the 192-residue chain is Xanthine phosphoribosyltransferase (192 aa).

Leu20 and Asn27 together coordinate xanthine. 128-132 (ANGDA) contributes to the 5-phospho-alpha-D-ribose 1-diphosphate binding site. Lys156 contacts xanthine.

This sequence belongs to the purine/pyrimidine phosphoribosyltransferase family. Xpt subfamily. Homodimer.

It is found in the cytoplasm. It carries out the reaction XMP + diphosphate = xanthine + 5-phospho-alpha-D-ribose 1-diphosphate. It participates in purine metabolism; XMP biosynthesis via salvage pathway; XMP from xanthine: step 1/1. Converts the preformed base xanthine, a product of nucleic acid breakdown, to xanthosine 5'-monophosphate (XMP), so it can be reused for RNA or DNA synthesis. The sequence is that of Xanthine phosphoribosyltransferase from Staphylococcus epidermidis (strain ATCC 35984 / DSM 28319 / BCRC 17069 / CCUG 31568 / BM 3577 / RP62A).